A 134-amino-acid polypeptide reads, in one-letter code: Isocitrate dehydrogenase [NAD] subunit alpha, mitochondrial (134 aa).

K37 carries the N6-succinyllysine modification. T50 carries the post-translational modification Phosphothreonine. Substrate contacts are provided by R64, R74, and R95.

Belongs to the isocitrate and isopropylmalate dehydrogenases family. Heterooligomer of subunits alpha (IDH3A), beta (IDH3B), and gamma (IDH3G) in the apparent ratio of 2:1:1. The heterodimer containing one IDH3A and one IDH3B subunit and the heterodimer containing one IDH3A and one IDH3G subunit assemble into a heterotetramer (which contains two subunits of IDH3A, one of IDH3B and one of IDH3G) and further into the heterooctamer. Mg(2+) serves as cofactor. The cofactor is Mn(2+).

The protein resides in the mitochondrion. The enzyme catalyses D-threo-isocitrate + NAD(+) = 2-oxoglutarate + CO2 + NADH. With respect to regulation, the heterotetramer and the heterodimer composed of IDH3A and IDH3G subunits can be allosterically activated by citrate (CIT) or/and ADP, and the two activators can act independently or synergistically. The heterodimer composed of IDH3A and IDH3B subunits cannot be allosterically regulated and the allosteric regulation of the heterotetramer is through the IDH3G subunit and not the IDH3B subunit. The IDH3G subunit contains the allosteric site which consists of a CIT-binding site and an ADP-binding site, and the binding of CIT and ADP causes conformational changes at the allosteric site which are transmitted to the active site in the catalytic subunit (IDH3A) through a cascade of conformational changes at the heterodimer interface, leading to stabilization of the isocitrate-binding at the active site and thus activation of the enzyme. ATP can activate the heterotetramer and the heterodimer composed of IDH3A and IDH3G subunits at low concentrations but inhibits their activities at high concentrations, whereas ATP exhibits only inhibitory effect on the heterodimer composed of IDH3A and IDH3B subunits. Functionally, catalytic subunit of the enzyme which catalyzes the decarboxylation of isocitrate (ICT) into alpha-ketoglutarate. The heterodimer composed of the alpha (IDH3A) and beta (IDH3B) subunits and the heterodimer composed of the alpha (IDH3A) and gamma (IDH3G) subunits, have considerable basal activity but the full activity of the heterotetramer (containing two subunits of IDH3A, one of IDH3B and one of IDH3G) requires the assembly and cooperative function of both heterodimers. The polypeptide is Isocitrate dehydrogenase [NAD] subunit alpha, mitochondrial (Mesocricetus auratus (Golden hamster)).